Reading from the N-terminus, the 349-residue chain is MAFKIASSPHVTRNLHTSTVMQRVILCLLPGLVVQCAFFGWGTLVQVLLAILVALSCEAAVMKLRNRNIKASLSDNSAMLTAILIGVAIPPLAPWWMIVMGTAFAIVIVKHLYGGLGHNLFNPAMAAYVLLLVSFPVQMTTWIAPSTVALHSPSLVESLQLIFNVGAHVNMEQFRLGIDGMTMATPLDTLKTDLSMGLTTTESLTKAIFDGSTGVGWFWVNLAYLAGGLVLLKLKAIRWHISTGVLLGLFVASSIGFLLSPDTQASPLMHLFSGATMLAAFFIATDPVTAATSSRGRIIFGALIGVLVYIIRTKGGYPDAFAFAVLLANLCAPFIDYYVRPRTYGHSTS.

3 helical membrane passes run 20 to 42 (VMQRVILCLLPGLVVQCAFFGWG), 77 to 99 (SAMLTAILIGVAIPPLAPWWMIV), and 124 to 144 (AMAAYVLLLVSFPVQMTTWIA). Thr-185 bears the FMN phosphoryl threonine mark. Helical transmembrane passes span 212–232 (STGVGWFWVNLAYLAGGLVLL), 239–259 (WHISTGVLLGLFVASSIGFLL), 265–285 (ASPLMHLFSGATMLAAFFIAT), 291–311 (ATSSRGRIIFGALIGVLVYII), and 315–335 (GGYPDAFAFAVLLANLCAPFI).

The protein belongs to the NqrB/RnfD family. In terms of assembly, the complex is composed of six subunits: RnfA, RnfB, RnfC, RnfD, RnfE and RnfG. The cofactor is FMN.

The protein localises to the cell inner membrane. Part of a membrane-bound complex that couples electron transfer with translocation of ions across the membrane. This chain is Ion-translocating oxidoreductase complex subunit D, found in Shewanella baltica (strain OS223).